A 199-amino-acid polypeptide reads, in one-letter code: Protein GrpE (199 aa).

Basic and acidic residues predominate over residues 1-10 (MTNQTEKEQV). The segment at 1-44 (MTNQTEKEQVEQDVSQATELAQEAQEAQTQDVEPELQQNNEIDP) is disordered. Positions 16–30 (QATELAQEAQEAQTQ) are enriched in low complexity.

This sequence belongs to the GrpE family. As to quaternary structure, homodimer.

It localises to the cytoplasm. In terms of biological role, participates actively in the response to hyperosmotic and heat shock by preventing the aggregation of stress-denatured proteins, in association with DnaK and GrpE. It is the nucleotide exchange factor for DnaK and may function as a thermosensor. Unfolded proteins bind initially to DnaJ; upon interaction with the DnaJ-bound protein, DnaK hydrolyzes its bound ATP, resulting in the formation of a stable complex. GrpE releases ADP from DnaK; ATP binding to DnaK triggers the release of the substrate protein, thus completing the reaction cycle. Several rounds of ATP-dependent interactions between DnaJ, DnaK and GrpE are required for fully efficient folding. This chain is Protein GrpE, found in Glaesserella parasuis serovar 5 (strain SH0165) (Haemophilus parasuis).